We begin with the raw amino-acid sequence, 356 residues long: 5-formaminoimidazole-4-carboxamide-1-(beta)-D-ribofuranosyl 5'-monophosphate synthetase 2 (356 aa).

The 5-amino-1-(5-phospho-beta-D-ribosyl)imidazole-4-carboxamide site is built by histidine 27 and serine 94. In terms of domain architecture, ATP-grasp spans 101–333 (RENFTGMAVP…YSDLMQKRLS (233 aa)). Residues 145–196 (PHDI…TRYD) and glutamate 226 contribute to the ATP site. Residue asparagine 255 coordinates 5-amino-1-(5-phospho-beta-D-ribosyl)imidazole-4-carboxamide. Residues glutamate 293 and glutamate 306 each coordinate Mg(2+).

It belongs to the phosphohexose mutase family. Mg(2+) is required as a cofactor. It depends on Mn(2+) as a cofactor.

It carries out the reaction 5-amino-1-(5-phospho-beta-D-ribosyl)imidazole-4-carboxamide + formate + ATP = 5-formamido-1-(5-phospho-D-ribosyl)imidazole-4-carboxamide + ADP + phosphate. It participates in purine metabolism; IMP biosynthesis via de novo pathway; 5-formamido-1-(5-phospho-D-ribosyl)imidazole-4-carboxamide from 5-amino-1-(5-phospho-D-ribosyl)imidazole-4-carboxamide (formate route): step 1/1. Its function is as follows. Catalyzes the ATP- and formate-dependent formylation of 5-aminoimidazole-4-carboxamide-1-beta-d-ribofuranosyl 5'-monophosphate (AICAR) to 5-formaminoimidazole-4-carboxamide-1-beta-d-ribofuranosyl 5'-monophosphate (FAICAR) in the absence of folates. The protein is 5-formaminoimidazole-4-carboxamide-1-(beta)-D-ribofuranosyl 5'-monophosphate synthetase 2 of Methanosarcina mazei (strain ATCC BAA-159 / DSM 3647 / Goe1 / Go1 / JCM 11833 / OCM 88) (Methanosarcina frisia).